The following is a 1346-amino-acid chain: Adhesion G protein-coupled receptor A3 (1346 aa).

An N-terminal signal peptide occupies residues 1–21 (MSVLCVLLLAFVLPLRGSSSA). The tract at residues 18 to 45 (SSSAGSTECKTYDERSRSAGKSSPSGAT) is disordered. Residues 22-739 (GSTECKTYDE…NVFIFRPLHP (718 aa)) are Extracellular-facing. LRR repeat units lie at residues 66–90 (FPNRTVSLILSNNKIQELLNGSFVG), 91–114 (LSSLERLDIKNNIITHIEPGAFYG), 116–138 (FSLKRLDLSKNLIGCLHVDVFKG), and 139–162 (LTNLVKLNLSENKFSSLSQGIFDS). One can recognise an LRRCT domain in the interval 176–223 (LLCDCNLQWLVVWIKEKAIGVKETRCSFPRSLQGQLITTLRAETLTCD). Positions 229-327 (PSFQMTPSQH…GNNTRTVHIV (99 aa)) constitute an Ig-like domain. An intrachain disulfide couples Cys-251 to Cys-311. LRR repeat units follow at residues 503-529 (LQRIALLRVSNGALAYSTNSPNIALEA), 574-600 (TSNLSALALKNTIVEASLQLPPTLFSS), and 611-632 (VYKLHLLAFRNGKLFPPTGNSS). Residues 563–728 (PERQLSFKCN…AVLMDLNRTG (166 aa)) enclose the GAIN-B domain. Positions 679–728 (PAFWNFSLQGGQGGWQSDGCRILHQDDNFTTVSCHSLNSYAVLMDLNRTG) are GPS. A disulfide bridge connects residues Cys-698 and Cys-712. A helical transmembrane segment spans residues 740 to 760 (VIYSTALVLVLCLLSVIVSYI). Residues 761–773 (YHHKSVRISKKCW) are Cytoplasmic-facing. The chain crosses the membrane as a helical span at residues 774–794 (HMLVNLCLHILLTCAVFVGGI). The Extracellular portion of the chain corresponds to 795–804 (NQTYNASVCQ). A helical membrane pass occupies residues 805 to 825 (AMGIVLHYSTLATALWSGVTA). Topologically, residues 826-854 (RNIYKQVTRKAKRYEELDEPPPPPRPMLR) are cytoplasmic. The helical transmembrane segment at 855 to 875 (FYLIGGGIPIIVCGITAAANI) threads the bilayer. Topologically, residues 876-897 (KNYGSQVNAPYCWMAWEPSLGA) are extracellular. Residues 898-918 (FYGPAAFIVFVDCMYFLSILI) form a helical membrane-spanning segment. At 919–977 (QLRRHPERRFELKEQSEEQQHLSVTEATEITPVHLESSPTAQPVPMSALENEHTFVSQL) the chain is on the cytoplasmic side. The chain crosses the membrane as a helical span at residues 978–998 (MGVAGSLTLYAALWVFGALAI). Residues 999 to 1005 (SQEHPAD) are Extracellular-facing. A helical transmembrane segment spans residues 1006–1026 (LVFACLFGALALGLGAFLVAH). The Cytoplasmic portion of the chain corresponds to 1027-1346 (HCVNRQDMRR…TGLWKHETTV (320 aa)). The segment covering 1157-1169 (SVNNNNLPGNANI) has biased composition (polar residues). Disordered stretches follow at residues 1157–1188 (SVNNNNLPGNANITGHPGRHHKNRSRAHRASR) and 1202–1284 (SVEG…DGSE). 2 stretches are compositionally biased toward basic residues: residues 1173–1187 (PGRHHKNRSRAHRAS) and 1212–1226 (NKRHHHESLHARNSR). The span at 1238–1252 (QSQLQQDSSDAASTS) shows a compositional bias: low complexity. The span at 1266–1280 (IGNGFGHGISNGGLL) shows a compositional bias: gly residues. Positions 1344–1346 (TTV) match the PDZ-binding motif.

This sequence belongs to the G-protein coupled receptor 2 family. Adhesion G-protein coupled receptor (ADGR) subfamily. In terms of assembly, interacts (via PDZ-binding motif) with disheveled proteins; leading to the localization of dishevelled proteins to specific membrane subdomains. Ubiquitously expressed at very low levels.

Its subcellular location is the cell membrane. Functionally, orphan receptor that acts as a critical modulator of planar cell polarity during gastrulation. Controls the localization of dishevelled. In Danio rerio (Zebrafish), this protein is Adhesion G protein-coupled receptor A3 (adgra3).